A 354-amino-acid chain; its full sequence is MAELKNDRYLRALLKEPVDVTPVWMMRQAGRYLPEYKATRAQAGDFMSLCKNHELACEVTLQPLRRYDLDAAILFSDILTVPDAMGLGLYFEAGEGPRFERPTDTIDAIKKLSIPDPEDELGYVMKAVSTIRRELNGAVPLIGFSGSPWTLATYMVEGGSSKTFEKIKKMAYAEPMALHMLLDKLADSVILYLNAQVANGAQSLMIFDSWGGALSHSAYREFSLHYMQKIIDGLTRFADGRKVPVTLFTKGGGLWLEAMAETGCDALGLDWTVDIADARRRVGHKVALQGNMDPSMLYAPIPRIEEEVGHILAGYGEGTGHVFNLGHGIHQHVDPEHAGAFIKAVHAQSKQYHK.

Residues 27-31, D77, Y154, S209, and H327 each bind substrate; that span reads RQAGR.

This sequence belongs to the uroporphyrinogen decarboxylase family. In terms of assembly, homodimer.

It localises to the cytoplasm. The enzyme catalyses uroporphyrinogen III + 4 H(+) = coproporphyrinogen III + 4 CO2. The protein operates within porphyrin-containing compound metabolism; protoporphyrin-IX biosynthesis; coproporphyrinogen-III from 5-aminolevulinate: step 4/4. In terms of biological role, catalyzes the decarboxylation of four acetate groups of uroporphyrinogen-III to yield coproporphyrinogen-III. The chain is Uroporphyrinogen decarboxylase from Shewanella baltica (strain OS185).